We begin with the raw amino-acid sequence, 606 residues long: NADH-ubiquinone oxidoreductase chain 5 (606 aa).

14 consecutive transmembrane segments (helical) span residues Met-1–Met-21, Ala-43–Ile-63, Met-87–Tyr-107, Phe-117–Met-137, Leu-140–Gly-160, Ala-171–Leu-191, Thr-241–Ile-261, Ile-273–Leu-293, Leu-310–Cys-330, Val-365–Phe-385, Leu-409–Phe-429, Leu-457–Ile-477, Met-488–Thr-508, and Gly-582–Leu-602.

Belongs to the complex I subunit 5 family. Core subunit of respiratory chain NADH dehydrogenase (Complex I) which is composed of 45 different subunits.

Its subcellular location is the mitochondrion inner membrane. It carries out the reaction a ubiquinone + NADH + 5 H(+)(in) = a ubiquinol + NAD(+) + 4 H(+)(out). Functionally, core subunit of the mitochondrial membrane respiratory chain NADH dehydrogenase (Complex I) which catalyzes electron transfer from NADH through the respiratory chain, using ubiquinone as an electron acceptor. Essential for the catalytic activity and assembly of complex I. The sequence is that of NADH-ubiquinone oxidoreductase chain 5 (MT-ND5) from Canis lupus (Gray wolf).